The primary structure comprises 280 residues: MSSSNFSCILSISLTFFILLLNKVNSAETTSFSITKFVPDQKNLIFQGDAKTASTGKLELSKAVKNSIGRALYSAPIHIWDSKTGSVANFQTTFTFTITAPNTYNVADGLAFFIAPIDTKPKSIHHGGYLGVFDSKTYKKSIQTVAVEIDTFYNAQWDPNPGNISSTGRHIGIDVNSIKSISTVPWSLENNKKANVAIGFNGATNVLSVDVEYPLIRHYTLSHVVPLKDVVPEWVRIGFSSSTGAEYSAHDILSWSFDSKLNLGFENNINANVSSSTQAA.

A signal peptide spans M1–S26. 2 residues coordinate Mn(2+): E148 and D150. Ca(2+)-binding residues include D150, F152, N154, and D158. D158 is a Mn(2+) binding site. Residue N163 is glycosylated (N-linked (GlcNAc...) asparagine). Position 170 (H170) interacts with Mn(2+). Residue N272 is glycosylated (N-linked (GlcNAc...) asparagine).

This sequence belongs to the leguminous lectin family.

This Medicago truncatula (Barrel medic) protein is Truncated lectin 2 (LEC2).